We begin with the raw amino-acid sequence, 169 residues long: Endoribonuclease YbeY (169 aa).

3 residues coordinate Zn(2+): His128, His132, and His138.

It belongs to the endoribonuclease YbeY family. Requires Zn(2+) as cofactor.

It localises to the cytoplasm. Its function is as follows. Single strand-specific metallo-endoribonuclease involved in late-stage 70S ribosome quality control and in maturation of the 3' terminus of the 16S rRNA. This chain is Endoribonuclease YbeY, found in Rhizorhabdus wittichii (strain DSM 6014 / CCUG 31198 / JCM 15750 / NBRC 105917 / EY 4224 / RW1) (Sphingomonas wittichii).